The sequence spans 316 residues: Daunorubicin resistance ATP-binding protein DrrA3 (316 aa).

In terms of domain architecture, ABC transporter spans 6-236 (ITVDGAEKRY…TGGDRIDVVL (231 aa)). 38 to 45 (GPNGAGKT) provides a ligand contact to ATP.

This sequence belongs to the ABC transporter superfamily. Drug exporter-1 (DrugE1) (TC 3.A.1.105) family. The complex is probably composed of two ATP-binding proteins (DrrA3) and two transmembrane proteins (DrrB3).

Its subcellular location is the cell membrane. It carries out the reaction daunorubicin(in) + ATP + H2O = daunorubicin(out) + ADP + phosphate + H(+). Part of the ABC transporter complex DrrA3B3 involved in daunorubicin efflux. Responsible for energy coupling to the transport system. Confers self-resistance to daunorubicin, an antibiotic produced by S.coeruleorubidus. The efficiency of DrrA3B3 to export daunorubicin is probably lower than that of DrrA1B1 or DrrA2B2. This chain is Daunorubicin resistance ATP-binding protein DrrA3, found in Streptomyces coeruleorubidus.